We begin with the raw amino-acid sequence, 804 residues long: Probable replication endonuclease from prophage-like region (804 aa).

Active-site O-(5'-phospho-DNA)-tyrosine intermediate residues include Y498 and Y502.

Belongs to the phage GPA family.

Functionally, possible endonuclease which induces a single-strand cut and initiates DNA replication. This chain is Probable replication endonuclease from prophage-like region, found in Shigella boydii serotype 4 (strain Sb227).